The following is a 938-amino-acid chain: Isoleucine--tRNA ligase (938 aa).

Positions 58-68 (PYANGSIHIGH) match the 'HIGH' region motif. Lys-183 carries the post-translational modification N6-acetyllysine. Glu-561 provides a ligand contact to L-isoleucyl-5'-AMP. The 'KMSKS' region signature appears at 602-606 (KMSKS). Residue Lys-605 participates in ATP binding. Zn(2+)-binding residues include Cys-901, Cys-904, Cys-921, and Cys-924.

It belongs to the class-I aminoacyl-tRNA synthetase family. IleS type 1 subfamily. Monomer. It depends on Zn(2+) as a cofactor.

It localises to the cytoplasm. The catalysed reaction is tRNA(Ile) + L-isoleucine + ATP = L-isoleucyl-tRNA(Ile) + AMP + diphosphate. Its function is as follows. Catalyzes the attachment of isoleucine to tRNA(Ile). As IleRS can inadvertently accommodate and process structurally similar amino acids such as valine, to avoid such errors it has two additional distinct tRNA(Ile)-dependent editing activities. One activity is designated as 'pretransfer' editing and involves the hydrolysis of activated Val-AMP. The other activity is designated 'posttransfer' editing and involves deacylation of mischarged Val-tRNA(Ile). The sequence is that of Isoleucine--tRNA ligase from Shigella boydii serotype 4 (strain Sb227).